The chain runs to 134 residues: MSNTETANPTAKAVARHVRVTPMKARRVVDLVRGRSVEDALNILKFAPQAASEPVAKVIASAAANAENNLDLDPSTLVVATAFVDEGATLKRFQPRAQGRAFRIRKRTSHITVIVESLPKTGTSTRNRRKGSAQ.

Belongs to the universal ribosomal protein uL22 family. Part of the 50S ribosomal subunit.

Its function is as follows. This protein binds specifically to 23S rRNA; its binding is stimulated by other ribosomal proteins, e.g. L4, L17, and L20. It is important during the early stages of 50S assembly. It makes multiple contacts with different domains of the 23S rRNA in the assembled 50S subunit and ribosome. In terms of biological role, the globular domain of the protein is located near the polypeptide exit tunnel on the outside of the subunit, while an extended beta-hairpin is found that lines the wall of the exit tunnel in the center of the 70S ribosome. The chain is Large ribosomal subunit protein uL22 from Rhodococcus jostii (strain RHA1).